The sequence spans 61 residues: Small ribosomal subunit protein uS14 (61 aa).

Zn(2+)-binding residues include cysteine 24, cysteine 27, cysteine 40, and cysteine 43.

The protein belongs to the universal ribosomal protein uS14 family. Zinc-binding uS14 subfamily. As to quaternary structure, part of the 30S ribosomal subunit. Contacts proteins S3 and S10. Requires Zn(2+) as cofactor.

Functionally, binds 16S rRNA, required for the assembly of 30S particles and may also be responsible for determining the conformation of the 16S rRNA at the A site. The sequence is that of Small ribosomal subunit protein uS14 from Staphylococcus aureus (strain USA300 / TCH1516).